The primary structure comprises 80 residues: Large ribosomal subunit protein uL30 (80 aa).

It belongs to the universal ribosomal protein uL30 family. Part of the 50S ribosomal subunit.

This is Large ribosomal subunit protein uL30 from Vesicomyosocius okutanii subsp. Calyptogena okutanii (strain HA).